Reading from the N-terminus, the 955-residue chain is Protein translocase subunit SecA (955 aa).

Residues Q90, 108 to 112, and D509 each bind ATP; that span reads GEGKT. Positions 537-571 are disordered; it reads EGHRPPVPLQRSGAEGGGGFAAKAAPASGPHGHAP. Low complexity predominate over residues 557–571; the sequence is AAKAAPASGPHGHAP.

The protein belongs to the SecA family. Monomer and homodimer. Part of the essential Sec protein translocation apparatus which comprises SecA, SecYEG and auxiliary proteins SecDF. Other proteins may also be involved.

The protein localises to the cell inner membrane. Its subcellular location is the cellular thylakoid membrane. The protein resides in the cytoplasm. It catalyses the reaction ATP + H2O + cellular proteinSide 1 = ADP + phosphate + cellular proteinSide 2.. Functionally, part of the Sec protein translocase complex. Interacts with the SecYEG preprotein conducting channel. Has a central role in coupling the hydrolysis of ATP to the transfer of proteins into and across the cell membrane, serving as an ATP-driven molecular motor driving the stepwise translocation of polypeptide chains across the membrane. In terms of biological role, probably participates in protein translocation into and across both the cytoplasmic and thylakoid membranes in cyanobacterial cells. This is Protein translocase subunit SecA from Synechococcus sp. (strain WH7803).